The sequence spans 562 residues: Adenylate kinase isoenzyme 5 (562 aa).

Adenylate kinase stretches follow at residues 133-316 (KIIL…VAVD) and 377-559 (KIIF…TAID). 142 to 147 (GSGKGT) is an ATP binding site. The tract at residues 162-193 (SVGELLRKKIHSASSNRKWSLIAKIITNGELA) is NMP 1. Residues arginine 168, 191 to 193 (ELA), 219 to 222 (GFPR), and glutamine 226 contribute to the AMP site. Residues 256 to 266 (KRAEQQGRPDD) are LID 1. ATP is bound at residue arginine 257. AMP contacts are provided by arginine 263 and arginine 274. 386-391 (GSGKGT) contacts ATP. An NMP 2 region spans residues 406 to 435 (STGELLRQELTSESERSKLIRDIMERGDLV). AMP contacts are provided by residues threonine 407, arginine 412, 433–435 (DLV), 462–465 (GYPR), and glutamine 469. Residues 499 to 509 (QRSQSSQRGED) form an LID 2 region. Position 500 (arginine 500) interacts with ATP. AMP-binding residues include arginine 506 and arginine 517. Glycine 545 contributes to the ATP binding site.

Belongs to the adenylate kinase family. Monomer. Interacts with YWHAZ. Brain specific.

It localises to the cytoplasm. It catalyses the reaction AMP + ATP = 2 ADP. The enzyme catalyses a 2'-deoxyribonucleoside 5'-diphosphate + ATP = a 2'-deoxyribonucleoside 5'-triphosphate + ADP. The catalysed reaction is a ribonucleoside 5'-diphosphate + ATP = a ribonucleoside 5'-triphosphate + ADP. In terms of biological role, nucleoside monophosphate (NMP) kinase that catalyzes the reversible transfer of the terminal phosphate group between nucleoside triphosphates and monophosphates. Active on AMP and dAMP with ATP as a donor. When GTP is used as phosphate donor, the enzyme phosphorylates AMP, CMP, and to a small extent dCMP. Also displays broad nucleoside diphosphate kinase activity. In Mus musculus (Mouse), this protein is Adenylate kinase isoenzyme 5 (Ak5).